Consider the following 329-residue polypeptide: ATP phosphoribosyltransferase regulatory subunit (329 aa).

Belongs to the class-II aminoacyl-tRNA synthetase family. HisZ subfamily. Heteromultimer composed of HisG and HisZ subunits.

The protein resides in the cytoplasm. Its pathway is amino-acid biosynthesis; L-histidine biosynthesis; L-histidine from 5-phospho-alpha-D-ribose 1-diphosphate: step 1/9. Its function is as follows. Required for the first step of histidine biosynthesis. May allow the feedback regulation of ATP phosphoribosyltransferase activity by histidine. This is ATP phosphoribosyltransferase regulatory subunit from Streptococcus gordonii (strain Challis / ATCC 35105 / BCRC 15272 / CH1 / DL1 / V288).